The chain runs to 574 residues: Kelch-like protein 18 (574 aa).

A BTB domain is found at 66–105 (MFTNDMMECKQDEIVMQGMDPSALEALINFAYNGNLAIDQ). The BACK domain maps to 140 to 242 (CLGVRQFAET…RPQFLSDRVQ (103 aa)). Kelch repeat units lie at residues 289–336 (LIYA…VVNG), 337–383 (LLYA…VLDG), 384–430 (QIYV…VFEG), 432–477 (IYVS…SLGS), 479–524 (MFVC…ASCG), and 525–571 (RLYA…CIPL).

As to quaternary structure, interacts with AURKA. Interacts (via BTB domain) with CUL3. Interacts (via kelch repeats) with UNC119.

The protein operates within protein modification; protein ubiquitination. Functionally, substrate-specific adapter of a BCR (BTB-CUL3-RBX1) E3 ubiquitin-protein ligase complex required for mitotic progression and cytokinesis. The BCR(KLHL18) E3 ubiquitin ligase complex mediates the ubiquitination of AURKA leading to its activation at the centrosome which is required for initiating mitotic entry. Regulates light-and dark-dependent alpha-transducin localization changes in rod photoreceptors through UNC119 ubiquitination and degradation. Preferentially ubiquitinates the unphosphorylated form of UNC119 over the phosphorylated form. In the presence of UNC119, under dark-adapted conditions alpha-transducin mislocalizes from the outer segment to the inner part of rod photoreceptors which leads to decreased photoreceptor damage caused by light. This chain is Kelch-like protein 18 (KLHL18), found in Homo sapiens (Human).